The sequence spans 526 residues: Acetyl-CoA hydrolase (526 aa).

Residue T2 is modified to N-acetylthreonine. A CoA-binding site is contributed by 277-281; the sequence is GIGNI. E302 functions as the 5-glutamyl coenzyme A thioester intermediate in the catalytic mechanism. S350 carries the phosphoserine modification. N392 and G396 together coordinate CoA.

Belongs to the acetyl-CoA hydrolase/transferase family. In terms of assembly, monomer. Post-translationally, glycosylated; contains mannose.

Its subcellular location is the cytoplasm. The catalysed reaction is acetyl-CoA + H2O = acetate + CoA + H(+). Presumably involved in regulating the intracellular acetyl-CoA pool for fatty acid and cholesterol synthesis and fatty acid oxidation. It may be involved in overall regulation of acetylation during melatonin synthesis. This Saccharomyces cerevisiae (strain ATCC 204508 / S288c) (Baker's yeast) protein is Acetyl-CoA hydrolase (ACH1).